Reading from the N-terminus, the 532-residue chain is Membrane protein insertase YidC (532 aa).

The next 5 helical transmembrane spans lie at 7-27 (FFIF…QSQM), 336-356 (LTIL…ITFI), 413-433 (GGFL…YMLI), 450-470 (LSSQ…MFFI), and 492-512 (PVIF…YYII).

This sequence belongs to the OXA1/ALB3/YidC family. Type 1 subfamily. Interacts with the Sec translocase complex via SecD. Specifically interacts with transmembrane segments of nascent integral membrane proteins during membrane integration.

The protein resides in the cell membrane. In terms of biological role, required for the insertion and/or proper folding and/or complex formation of integral membrane proteins into the membrane. Involved in integration of membrane proteins that insert both dependently and independently of the Sec translocase complex, as well as at least some lipoproteins. Aids folding of multispanning membrane proteins. The sequence is that of Membrane protein insertase YidC from Buchnera aphidicola subsp. Acyrthosiphon pisum (strain Tuc7).